We begin with the raw amino-acid sequence, 247 residues long: Anionic trypsin (247 aa).

An N-terminal signal peptide occupies residues methionine 1 to alanine 15. Positions threonine 16 to lysine 23 are cleaved as a propeptide — activation peptide. One can recognise a Peptidase S1 domain in the interval isoleucine 24–alanine 244. Intrachain disulfides connect cysteine 30–cysteine 160, cysteine 48–cysteine 64, cysteine 132–cysteine 233, cysteine 139–cysteine 206, cysteine 171–cysteine 185, and cysteine 196–cysteine 220. The active-site Charge relay system is the histidine 63. Positions 75, 77, 80, and 85 each coordinate Ca(2+). Catalysis depends on aspartate 107, which acts as the Charge relay system. The active-site Charge relay system is serine 200.

This sequence belongs to the peptidase S1 family. Ca(2+) is required as a cofactor.

Its subcellular location is the secreted. It is found in the extracellular space. The enzyme catalyses Preferential cleavage: Arg-|-Xaa, Lys-|-Xaa.. This Canis lupus familiaris (Dog) protein is Anionic trypsin.